Consider the following 1029-residue polypeptide: Protein STABILIZED1 (1029 aa).

The Ubiquitin-like domain occupies 1–85 (MVFLSIPNGK…VIIHVLLLGG (85 aa)). Residue Gly-85 forms a Glycyl lysine isopeptide (Gly-Lys) (interchain with K-? in acceptor proteins) linkage. The segment at 142–170 (AAPGVGRGAGKPSEAEAEDDEEAEEKRYD) is disordered. Positions 210 to 243 (DSRRKDRREAKLKEEIEKYRASNPKITEQFADLK) form a coiled coil. 15 HAT repeats span residues 367–399 (YDRN…VEEV), 401–431 (GKIK…CRLA), 432–462 (NPED…KLEH), 463–494 (DVEN…LANE), 496–524 (DARI…LETY), 526–554 (ESKK…LEEA), 639–671 (GSIE…LEKS), 673–705 (GSRE…EKWL), 707–739 (GDVP…LEFE), 741–772 (KEPE…VERE), 774–806 (GNVE…LEER), 808–840 (KHLE…LEEK), 842–874 (NGLN…AELR), 876–908 (DNKR…MAPR), and 940–972 (KKVE…FELQ). The TPR 1 repeat unit spans residues 625–658 (KRTWVADADECKKRGSIETARAIYAHALSVFLTK). One copy of the TPR 2 repeat lies at 794-827 (FKLWLMLGQLEERFKHLEQARKAYDTGLKHCPHC). One copy of the TPR 3 repeat lies at 926–959 (PHVTIAVAKLFWQDKKVEKARAWFERAVTVGPDI).

In terms of assembly, component of a pre-mRNA splicing complex. Interacts with ZOP1. Interacts with PRP31. As to expression, ubiquitous.

It localises to the nucleus. The protein localises to the cajal body. Its function is as follows. Pre-mRNA splicing factor required for splicing and for the turnover of unstable transcripts. May be a U5 snRNP-associated protein involved in the formation of U4/U6-U5 tri-snRNP. Involved in responses to abiotic stresses. Involved in microRNAs (miRNAs) biogenesis by functioning in primary miRNAs (pri-miRNAs) splicing. Required for DNA methylation and transcriptional silencing through the RNA-directed DNA methylation (RdDM) pathway. This chain is Protein STABILIZED1 (STA1), found in Arabidopsis thaliana (Mouse-ear cress).